The chain runs to 511 residues: MLHLMIKPGQLSLKQLRQVSRSPVVLSLDPEAIPAIAESAQVVEQVISEGRTVYGINTGFGLLANTKIAPQDLETLQKSIVLSHAAGIGELMSDETVRLMMLLKINSLARGYSGIRLEVIQALIELVNNQIYPCVPKKGSVGASGDLAPLAHMSTVLLGEGQARYNGKIISGLEAMKIAGLEPITLAPKEGLALLNGTQASTAFALEGLFVAEDLFASATVCGAMSVEAALGSRRPFDPRIHRVRGHRTQMDAATAYRHLLDVSSEIGQSHSNCEKVQDPYSLRCQPQVMGACLQQIRSAAEVLEVEANSVSDNPLVFAEDGDIISGGNFHAEPVAMAADNLALAIAEIGSLSERRMALLIDSALSKLPPFLVDNGGVNSGFMIAQVTAAALASENKTLAHPASVDSLPTSANQEDHVSMATFAARRLRDMGENTRGILAVEYLAAAQGLDFRAPLKSSPRIEEARQILREKVPFYDKDRYFAPDIEKANALLQLAVHNRLMPDQLLPSQH.

A cross-link (5-imidazolinone (Ala-Gly)) is located at residues 143–145 (ASG). S144 carries the post-translational modification 2,3-didehydroalanine (Ser).

This sequence belongs to the PAL/histidase family. Post-translationally, contains an active site 4-methylidene-imidazol-5-one (MIO), which is formed autocatalytically by cyclization and dehydration of residues Ala-Ser-Gly.

The protein resides in the cytoplasm. It catalyses the reaction L-histidine = trans-urocanate + NH4(+). Its pathway is amino-acid degradation; L-histidine degradation into L-glutamate; N-formimidoyl-L-glutamate from L-histidine: step 1/3. This is Histidine ammonia-lyase from Vibrio cholerae serotype O1 (strain ATCC 39315 / El Tor Inaba N16961).